An 896-amino-acid polypeptide reads, in one-letter code: Bifunctional glutamine synthetase adenylyltransferase/adenylyl-removing enzyme (896 aa).

Residues 1–411 (MSDNRLDTAR…LFNEILSEPE (411 aa)) are adenylyl removase. The adenylyl transferase stretch occupies residues 417 to 896 (NSEWQWAWQD…EVFGEEAATV (480 aa)).

The protein belongs to the GlnE family. Mg(2+) serves as cofactor.

It carries out the reaction [glutamine synthetase]-O(4)-(5'-adenylyl)-L-tyrosine + phosphate = [glutamine synthetase]-L-tyrosine + ADP. It catalyses the reaction [glutamine synthetase]-L-tyrosine + ATP = [glutamine synthetase]-O(4)-(5'-adenylyl)-L-tyrosine + diphosphate. Its function is as follows. Involved in the regulation of glutamine synthetase GlnA, a key enzyme in the process to assimilate ammonia. When cellular nitrogen levels are high, the C-terminal adenylyl transferase (AT) inactivates GlnA by covalent transfer of an adenylyl group from ATP to specific tyrosine residue of GlnA, thus reducing its activity. Conversely, when nitrogen levels are low, the N-terminal adenylyl removase (AR) activates GlnA by removing the adenylyl group by phosphorolysis, increasing its activity. The regulatory region of GlnE binds the signal transduction protein PII (GlnB) which indicates the nitrogen status of the cell. In Neisseria meningitidis serogroup B (strain ATCC BAA-335 / MC58), this protein is Bifunctional glutamine synthetase adenylyltransferase/adenylyl-removing enzyme.